The sequence spans 137 residues: ATP synthase epsilon chain (137 aa).

This sequence belongs to the ATPase epsilon chain family. In terms of assembly, F-type ATPases have 2 components, CF(1) - the catalytic core - and CF(0) - the membrane proton channel. CF(1) has five subunits: alpha(3), beta(3), gamma(1), delta(1), epsilon(1). CF(0) has three main subunits: a, b and c.

It is found in the cell inner membrane. Produces ATP from ADP in the presence of a proton gradient across the membrane. The sequence is that of ATP synthase epsilon chain from Magnetococcus marinus (strain ATCC BAA-1437 / JCM 17883 / MC-1).